The sequence spans 64 residues: Small ribosomal subunit protein eS17 (64 aa).

This sequence belongs to the eukaryotic ribosomal protein eS17 family.

This chain is Small ribosomal subunit protein eS17, found in Methanosarcina acetivorans (strain ATCC 35395 / DSM 2834 / JCM 12185 / C2A).